Consider the following 691-residue polypeptide: Calcium-binding and coiled-coil domain-containing protein 1 (691 aa).

The segment at 1–30 (MEESSLSRAPSRGGVNFLNVARTYIPNTKV) is p300 KIX-binding. An N-terminal AD (CTNNB1 binding site) region spans residues 1–190 (MEESSLSRAP…VQELEAALAT (190 aa)). At Ser-4 the chain carries Phosphoserine. An interaction with GATA1 region spans residues 45–125 (SDWIGIFKVE…FQFREPRPMD (81 aa)). 3 coiled-coil regions span residues 145–205 (KATV…YKGL), 232–339 (ELED…AELE), and 417–514 (QSME…ADEK). Residues 501 to 691 (RKLEARLEKV…FSTQDPFTFE (191 aa)) are C-terminal AD (CTNNB1 binding site); interaction with CCAR1. The tract at residues 512-605 (DEKWTEDAAT…DSEAEDEKSV (94 aa)) is disordered. The UBZ1-type zinc finger occupies 653–679 (WKECPICKERFPAESDKDALEGHMDGH). 4 residues coordinate Zn(2+): Cys-656, Cys-659, His-675, and His-679.

This sequence belongs to the CALCOCO family. In terms of assembly, part of a calphoglin complex consisting of CALCOCO1, PPA1 and PGM. Interacts with the bHLH-PAS domains of GRIP1, AHR and ARNT. Interacts with CTNNB1 via both its N- and C-terminal regions. Interacts with EP300. Interacts with CCAR1 (via N-terminus) and GATA1. In terms of tissue distribution, expressed in all tissues examined except spleen, with high levels of expression in the heart and kidney.

Its subcellular location is the cytoplasm. It is found in the nucleus. Functions as a coactivator for aryl hydrocarbon and nuclear receptors (NR). Recruited to promoters through its contact with the N-terminal basic helix-loop-helix-Per-Arnt-Sim (PAS) domain of transcription factors or coactivators, such as NCOA2. During ER-activation acts synergistically in combination with other NCOA2-binding proteins, such as EP300, CREBBP and CARM1. Involved in the transcriptional activation of target genes in the Wnt/CTNNB1 pathway. Functions as a secondary coactivator in LEF1-mediated transcriptional activation via its interaction with CTNNB1. Coactivator function for nuclear receptors and LEF1/CTNNB1 involves differential utilization of two different activation regions. In association with CCAR1 enhances GATA1- and MED1-mediated transcriptional activation from the gamma-globin promoter during erythroid differentiation of K562 erythroleukemia cells. The chain is Calcium-binding and coiled-coil domain-containing protein 1 (Calcoco1) from Mus musculus (Mouse).